A 507-amino-acid polypeptide reads, in one-letter code: Probable malate:quinone oxidoreductase 2 (507 aa).

It belongs to the MQO family. FAD is required as a cofactor.

It carries out the reaction (S)-malate + a quinone = a quinol + oxaloacetate. It participates in carbohydrate metabolism; tricarboxylic acid cycle; oxaloacetate from (S)-malate (quinone route): step 1/1. The chain is Probable malate:quinone oxidoreductase 2 from Pseudomonas aeruginosa (strain ATCC 15692 / DSM 22644 / CIP 104116 / JCM 14847 / LMG 12228 / 1C / PRS 101 / PAO1).